A 344-amino-acid chain; its full sequence is Dihydroorotase (344 aa).

Positions 14 and 16 each coordinate Zn(2+). Substrate contacts are provided by residues 16-18 (HLR) and Asn-42. Residues Lys-100, His-137, and His-175 each coordinate Zn(2+). Residue Lys-100 is modified to N6-carboxylysine. His-137 is a substrate binding site. Residue Leu-220 participates in substrate binding. Zn(2+) is bound at residue Asp-248. Residue Asp-248 is part of the active site. His-252 and Ala-264 together coordinate substrate.

It belongs to the metallo-dependent hydrolases superfamily. DHOase family. Class II DHOase subfamily. Homodimer. Requires Zn(2+) as cofactor.

The catalysed reaction is (S)-dihydroorotate + H2O = N-carbamoyl-L-aspartate + H(+). Its pathway is pyrimidine metabolism; UMP biosynthesis via de novo pathway; (S)-dihydroorotate from bicarbonate: step 3/3. Its function is as follows. Catalyzes the reversible cyclization of carbamoyl aspartate to dihydroorotate. The sequence is that of Dihydroorotase from Ralstonia nicotianae (strain ATCC BAA-1114 / GMI1000) (Ralstonia solanacearum).